The primary structure comprises 367 residues: Cycloaraneosene synthase sdnA (367 aa).

The N-terminal stretch at 1 to 24 (MSLYGLFTLATSYLPSVGGGAALA) is a signal peptide. Positions 115, 260, and 264 each coordinate Mg(2+). The DDXXD motif signature appears at 115 to 119 (DDQFD). Residue Asn276 is glycosylated (N-linked (GlcNAc...) asparagine).

Belongs to the terpene synthase family. Mg(2+) serves as cofactor.

It carries out the reaction (2E,6E,10E)-geranylgeranyl diphosphate = cycloaraneosene + diphosphate. The protein operates within antibiotic biosynthesis. In terms of biological role, cycloaraneosene synthase; part of the gene cluster that mediates the biosynthesis of sordarin and hypoxysordarin, glycoside antibiotics with a unique tetracyclic diterpene aglycone structure. First, the geranylgeranyl diphosphate synthase sdnC constructs GGDP from farnesyl diphosphate and isopentenyl diphosphate. The diterpene cyclase sdnA then catalyzes the cyclization of GGDP to afford cycloaraneosene. Cycloaraneosene is then hydroxylated four times by the putative cytochrome P450 monooxygenases sdnB, sdnE, sdnF and sdnH to give a hydroxylated cycloaraneosene derivative such as cycloaraneosene-8,9,13,19-tetraol. Although the order of the hydroxylations is unclear, at least C8, C9 and C13 of the cycloaraneosene skeleton are hydroxylated before the sordaricin formation. Dehydration of the 13-hydroxy group of the hydroxylated cycloaraneosene derivative might be catalyzed by an unassigned hypothetical protein such as sdnG and sdnP to construct the cyclopentadiene moiety. The FAD-dependent oxidoreductase sdnN is proposed to catalyze the oxidation at C9 of the hydroxylated cycloaraneosene derivative and also catalyze the Baeyer-Villiger oxidation to give the lactone intermediate. The presumed lactone intermediate would be hydrolyzed to give an acrolein moiety and a carboxylate moiety. Then, [4+2]cycloaddition would occur between the acrolein moiety and the cyclopentadiene moiety to give sordaricin. SdnN might also be involved in the [4+2]cycloaddition after the hypothesized oxidation to accommodate the oxidized product and prompt the [4+2]cycloaddition. GDP-6-deoxy-D-altrose may be biosynthesized from GDP-D-mannose by the putative GDP-mannose-4,6-dehydratase sdnI and the short-chain dehydrogenase sdnK. The glycosyltransferase sdnJ catalyzes the attachment of 6-deoxy-D-altrose onto the 19-hydroxy group of sordaricin to give 4'-O-demethylsordarin. The methyltransferase sdnD would complete the biosynthesis of sordarin. Sordarin can be further modified into hypoxysordarin. The unique acyl chain at the 3'-hydroxy group of hypoxysordarin would be constructed by an iterative type I PKS sdnO and the trans-acting polyketide methyltransferase sdnL. SdnL would be responsible for the introduction of an alpha-methyl group of the polyketide chain. Alternatively, the beta-lactamase-like protein sdnR might be responsible for the cleavage and transfer of the polyketide chain from the PKS sdnO to sordarin. Two putative cytochrome P450 monooxygenases, sdnQ and sdnT, might catalyze the epoxidations of the polyketide chain to complete the biosynthesis of hypoxysordarin. Transcriptional regulators sdnM and sdnS are presumably encoded for the transcriptional regulation of the expression of the sdn gene cluster. The polypeptide is Cycloaraneosene synthase sdnA (Sordaria araneosa (Pleurage araneosa)).